Consider the following 327-residue polypeptide: Lipoyl synthase (327 aa).

Residues Cys-66, Cys-71, Cys-77, Cys-92, Cys-96, Cys-99, and Ser-306 each coordinate [4Fe-4S] cluster. The region spanning Phe-78–Ser-295 is the Radical SAM core domain.

Belongs to the radical SAM superfamily. Lipoyl synthase family. Requires [4Fe-4S] cluster as cofactor.

The protein localises to the cytoplasm. It carries out the reaction [[Fe-S] cluster scaffold protein carrying a second [4Fe-4S](2+) cluster] + N(6)-octanoyl-L-lysyl-[protein] + 2 oxidized [2Fe-2S]-[ferredoxin] + 2 S-adenosyl-L-methionine + 4 H(+) = [[Fe-S] cluster scaffold protein] + N(6)-[(R)-dihydrolipoyl]-L-lysyl-[protein] + 4 Fe(3+) + 2 hydrogen sulfide + 2 5'-deoxyadenosine + 2 L-methionine + 2 reduced [2Fe-2S]-[ferredoxin]. It participates in protein modification; protein lipoylation via endogenous pathway; protein N(6)-(lipoyl)lysine from octanoyl-[acyl-carrier-protein]: step 2/2. Its function is as follows. Catalyzes the radical-mediated insertion of two sulfur atoms into the C-6 and C-8 positions of the octanoyl moiety bound to the lipoyl domains of lipoate-dependent enzymes, thereby converting the octanoylated domains into lipoylated derivatives. The sequence is that of Lipoyl synthase from Neisseria meningitidis serogroup B (strain ATCC BAA-335 / MC58).